The sequence spans 497 residues: Probable cytosol aminopeptidase (497 aa).

2 residues coordinate Mn(2+): K263 and D268. Residue K275 is part of the active site. The Mn(2+) site is built by D286, D345, and E347. R349 is an active-site residue.

It belongs to the peptidase M17 family. Mn(2+) is required as a cofactor.

It is found in the cytoplasm. The catalysed reaction is Release of an N-terminal amino acid, Xaa-|-Yaa-, in which Xaa is preferably Leu, but may be other amino acids including Pro although not Arg or Lys, and Yaa may be Pro. Amino acid amides and methyl esters are also readily hydrolyzed, but rates on arylamides are exceedingly low.. It carries out the reaction Release of an N-terminal amino acid, preferentially leucine, but not glutamic or aspartic acids.. Functionally, presumably involved in the processing and regular turnover of intracellular proteins. Catalyzes the removal of unsubstituted N-terminal amino acids from various peptides. This Methylorubrum extorquens (strain CM4 / NCIMB 13688) (Methylobacterium extorquens) protein is Probable cytosol aminopeptidase.